The primary structure comprises 599 residues: Elongation factor 4 (599 aa).

A tr-type G domain is found at 2 to 184 (KNIRNFSIIA…RLVRDIPPPE (183 aa)). GTP contacts are provided by residues 14–19 (DHGKST) and 131–134 (NKID).

It belongs to the TRAFAC class translation factor GTPase superfamily. Classic translation factor GTPase family. LepA subfamily.

The protein resides in the cell inner membrane. The enzyme catalyses GTP + H2O = GDP + phosphate + H(+). Required for accurate and efficient protein synthesis under certain stress conditions. May act as a fidelity factor of the translation reaction, by catalyzing a one-codon backward translocation of tRNAs on improperly translocated ribosomes. Back-translocation proceeds from a post-translocation (POST) complex to a pre-translocation (PRE) complex, thus giving elongation factor G a second chance to translocate the tRNAs correctly. Binds to ribosomes in a GTP-dependent manner. The polypeptide is Elongation factor 4 (Sodalis glossinidius (strain morsitans)).